We begin with the raw amino-acid sequence, 666 residues long: Peptidase S41 family protein phomP1' (666 aa).

A signal peptide spans 1–27 (MSSFLVQTAVVRLFLLGVVFWFPFALS). N-linked (GlcNAc...) asparagine glycosylation is found at Asn-70, Asn-214, and Asn-234. The tract at residues 303–504 (DVAVLQITSF…LLQAQGVRTV (202 aa)) is peptidase S41 domain. Asn-555 and Asn-612 each carry an N-linked (GlcNAc...) asparagine glycan.

It belongs to the peptidase S41A family.

It participates in mycotoxin biosynthesis. Functionally, peptidase S41 family protein; part of the gene cluster that mediates the biosynthesis of the phomopsins, a group of hexapeptide mycotoxins which infects lupins and causes lupinosis disease in livestock. Within the pathway, phomP1 and phomP1' are probably involved in the processing of the phomA and phomA' precursors. The pathway starts with the processing of the precursor phomA by several endopeptidases including kexin proteases as well as the cluster-specific S41 family peptidase phomP1 and the oligopeptidase phomG to produce 10 identical copies of the hexapeptide Tyr-Val-Ile-Pro-Ile-Asp. After being excised from the precursor peptide, the core peptides are cyclized and modified post-translationally by enzymes encoded within the gene cluster. The timing and order of proteolysis of the phomA precursor and PTMs are still unknown. Two tyrosinase-like enzymes, phomQ1 and phomQ2, catalyze the chlorination and hydroxylation of Tyr, respectively. PhomYb, is proposed to be involved in the construction of the macrocyclic structure. The other 4 ustYa family proteins may be involved in PTMs that generate the unique structure of phomopsin A. PhomYa is required for the hydroxylation of C-beta of Tyr. PhomYc, phomYd, and phomYe are responsible for the biosynthesis of 2,3-dehydroisoleucine (dIle), 2,3-dehydroaspartic acid (dAsp), and 3,4-dehydroproline (dPro), respectively. While dIle formation by phomYc is indispensable for the installation of dAsp by phomYd, the order of the other PTMs have not been elucidated yet. Most of the biosynthetic enzymes likely have broad substrate specificity, and thus, there might be a metabolic grid from a precursor to phomopsin A. The enzyme(s) responsible for the biosynthesis of 3,4-dehydrovaline (dVal) have also not been identified yet. Finally, phomM acts as an S-adenosylmethionine-dependent alpha-N-methyltransferase that catalyzes two successive N-methylation reactions, converting N-desmethyl-phomopsin A to phomopsin A and phomopsin A further to an N,N-dimethylated congener called phomopsin E. The protein is Peptidase S41 family protein phomP1' of Diaporthe leptostromiformis (Lupinosis disease fungus).